Reading from the N-terminus, the 425-residue chain is Dihydroorotase (425 aa).

Positions 56 and 58 each coordinate Zn(2+). Residues 58–60 (HYR) and N90 contribute to the substrate site. Zn(2+) is bound by residues D148, H175, and H228. N274 provides a ligand contact to substrate. Zn(2+) is bound at residue D301. The active site involves D301. Substrate is bound by residues H305 and 319–320 (FG).

Belongs to the metallo-dependent hydrolases superfamily. DHOase family. Class I DHOase subfamily. It depends on Zn(2+) as a cofactor.

The enzyme catalyses (S)-dihydroorotate + H2O = N-carbamoyl-L-aspartate + H(+). It functions in the pathway pyrimidine metabolism; UMP biosynthesis via de novo pathway; (S)-dihydroorotate from bicarbonate: step 3/3. In terms of biological role, catalyzes the reversible cyclization of carbamoyl aspartate to dihydroorotate. The chain is Dihydroorotase from Lactobacillus acidophilus (strain ATCC 700396 / NCK56 / N2 / NCFM).